The chain runs to 1364 residues: MAELKVEAPASVDWQKRCLTLETQLFRFRLQASKIRELLADKMQELEQRLLEAEQRAENAETQVGVMEEKVKLSNLKNVDSEGSLHRKYQELLKAIKGKDELISQLEAQLEKQKQMRAEEAKTVQEKAAKIKEWVTLKLAKLEMENQHLKSHNQRLVEQVGSLQDALEAIQIAPSRKLLVPPYGAAEQDSVPSEPGIQPMGQDSGSQAQGLKAAVLAPSPGALQSKDSVSEAASPLEDSSSSTVHSGETVEAKPLQPHLGRESPPHQPCMKLLTFRCSSASWGEGLVTAQRGMLPGTKTSAREGGPGSSLTLPKVRAPGTPRDSIQLAKRHHSQPQVGHGHFGRVVNIETEAFSALHPSGLPELESRARSREEPEKMEMEEPPPAGKNEERESPKALGAELEEVELGNKPPTPPLHQFSSWESRIYAVATSGMRLSDMSPRSNTACCASSPPALVSPGSFSGLVYKNVTVPVYTALKGRATQISNMPFMDESSGSDDDCSSQASFRISVPSSESRKTSGLGSPRAIKRGVSMSSLSSEGDYAIPPDACSLDSDYSEPEHKLQRTSSYSTDGLGLGGESLEKSGYLLKMGSQVKTWKRRWFVLRQGQIMYYKSPSDVIRKPQGQVDLNSRCQIVRGEGSQTFQLISEKKTYYLTADSPSLLEEWIRVLQSLLKVQATGPPALLRGGTKPTVKGWLTKVKHGHSKVVWCALVGKIFYYYRSHEDKRPLGCLPVRDAHIEEVDRSCDSDEDYEAGGTRRLLSSHCTLVIHPTEHSPTYLLIGTKHEKDTWLYHLTVAAGGSSAKVGTAYEQLIGKLMDGEGDPDSPLWRHPMLCYSKDGLYASLTTLPSEALQTEALKLFKSCQLFINVPVEAASVDYHVSLAQTALQVCLVHPELQSEIYCQLMKQTSCRPPQKYSLMQCWQLLALCAPLFLPQHHFLWYVKQQLQRHADPRSETGQYATYCQRAVERTLRTGEREARPSRMEVVSILLRNPFHHSLPFSIPVHFTNGTYHVVGFDGSSTVDEFLQRLNQEIGMRKPSHSGFALFTDDPSGRDLEHCLQGSVKICDAISKWEQAMKELHPGKSEGGTRVVKLMYKNRLYFRSQVKGETDRERLLLASQTSREIVAGRFPINKELALEMAALMAQVEYGDLEKPALPGPGGTSPAKAQHLLQQVLDRFHPRRYRHGAPAEQLRHLADMLTTKWATLQGCSPPECIRIYLTVARKWPFFGAKLFAAQPAQLSSKENALVWIAVNEDGVSILDHNTMQVHITYPYSSVTTFGGCRDDFMLVIRSIPDKSSGKSHIEKLIFRMAAPKIAEATFIMASYMNHCTTTVNPPTNPPGACQLWELDGRQFFSSVSCATKGPTLL.

Residues 28–169 (FRLQASKIRE…VGSLQDALEA (142 aa)) are a coiled coil. Disordered regions lie at residues 184-266 (GAAE…SPPH), 296-321 (GTKTSAREGGPGSSLTLPKVRAPGTP), 356-395 (LHPSGLPELESRARSREEPEKMEMEEPPPAGKNEERESPK), 487-529 (PFMD…IKRG), and 546-568 (DACSLDSDYSEPEHKLQRTSSYS). A compositionally biased stretch (polar residues) spans 237-246 (EDSSSSTVHS). Over residues 364–379 (LESRARSREEPEKMEM) the composition is skewed to basic and acidic residues. The segment covering 509 to 520 (VPSSESRKTSGL) has biased composition (polar residues). 2 consecutive PH domains span residues 578 to 672 (SLEK…SLLK) and 687 to 796 (KPTV…VAAG). Ser745 bears the Phosphoserine mark. One can recognise a MyTH4 domain in the interval 832-986 (YSKDGLYASL…PSRMEVVSIL (155 aa)). The FERM domain maps to 997–1333 (FSIPVHFTNG…NHCTTTVNPP (337 aa)).

This chain is Pleckstrin homology domain-containing family H member 1 (PLEKHH1), found in Homo sapiens (Human).